Consider the following 287-residue polypeptide: Tetraspanning orphan receptor (287 aa).

The Extracellular segment spans residues 1–27; the sequence is MSPSLVSDTQKHERGSHGVKIKHFSPY. Residues 28–48 traverse the membrane as a helical segment; that stretch reads IAVCVTTFSLAFCCFMVHGAI. Residues 49-55 lie on the Cytoplasmic side of the membrane; the sequence is TRQPTHL. Residues 56–76 traverse the membrane as a helical segment; the sequence is LPFFFIQVFDLIICLIHILGF. Over 77–91 the chain is Extracellular; sequence MSSTSDIRLVIHTKT. Residues 92–114 traverse the membrane as a helical segment; it reads GPIYIKSTGLTFIILSISRMMLA. Residues 115 to 287 lie on the Cytoplasmic side of the membrane; sequence FKAYCLGMVW…NASSNAHSSC (173 aa). The disordered stretch occupies residues 165 to 190; that stretch reads NNSIGNSGSPNEPNTRPRPDTITYDP.

In terms of assembly, interacts (via N-terminal extracellular domain) with human C2a.

The protein localises to the cell membrane. Cell surface receptor that binds to human complement C2a protein. This results in inhibition of the classical and lectin pathways of complement activation, probably due to interference with binding of C2a to C4b and interference with cleavage by C1 or MASP2 such that C3 convertase cannot be formed. This infers resistance to complement-mediated cell lysis, allowing parasite survival and infection. This Trypanosoma cruzi protein is Tetraspanning orphan receptor.